The following is a 467-amino-acid chain: Cobyrinate a,c-diamide synthase (467 aa).

In terms of domain architecture, GATase cobBQ-type spans 256 to 449; sequence RVGYAADQAF…AHIHVEGAPE (194 aa). The active-site Nucleophile is Cys-338.

This sequence belongs to the CobB/CbiA family. The cofactor is Mg(2+).

The enzyme catalyses cob(II)yrinate + 2 L-glutamine + 2 ATP + 2 H2O = cob(II)yrinate a,c diamide + 2 L-glutamate + 2 ADP + 2 phosphate + 2 H(+). It functions in the pathway cofactor biosynthesis; adenosylcobalamin biosynthesis; cob(II)yrinate a,c-diamide from sirohydrochlorin (anaerobic route): step 10/10. Catalyzes the ATP-dependent amidation of the two carboxylate groups at positions a and c of cobyrinate, using either L-glutamine or ammonia as the nitrogen source. This Magnetococcus marinus (strain ATCC BAA-1437 / JCM 17883 / MC-1) protein is Cobyrinate a,c-diamide synthase.